Here is a 478-residue protein sequence, read N- to C-terminus: Glutamine synthetase (478 aa).

The region spanning 16-100 (EKVEYVDVRF…INFFVHDPFT (85 aa)) is the GS beta-grasp domain. One can recognise a GS catalytic domain in the interval 108 to 478 (PRNIARKAEN…PYEFALYYDV (371 aa)). Mg(2+)-binding residues include E133 and E135. Residue E214 coordinates ATP. Residues E219 and E227 each contribute to the Mg(2+) site. Residue 230–232 (YQF) participates in ATP binding. L-glutamate is bound by residues 271-272 (NG) and G272. Residue H276 participates in Mg(2+) binding. ATP contacts are provided by residues 278–280 (HQS) and S280. The L-glutamate site is built by R329, E335, and R347. Positions 347, 352, and 361 each coordinate ATP. Residue E366 coordinates Mg(2+). Residue R368 participates in L-glutamate binding. Y406 carries the O-AMP-tyrosine modification.

It belongs to the glutamine synthetase family. In terms of assembly, oligomer of 12 subunits arranged in the form of two hexagons. It depends on Mg(2+) as a cofactor.

The protein resides in the cytoplasm. The catalysed reaction is L-glutamate + NH4(+) + ATP = L-glutamine + ADP + phosphate + H(+). With respect to regulation, when cellular nitrogen levels are high, the C-terminal adenylyl transferase (AT) of GlnE inhibits GlnA by covalent transfer of an adenylyl group from ATP to Tyr-406. Conversely, when nitrogen levels are low, the N-terminal adenylyl removase (AR) of GlnE activates GlnA by removing the adenylyl group by phosphorolysis. The fully adenylated enzyme complex is inactive. In terms of biological role, involved in nitrogen metabolism via ammonium assimilation. Catalyzes the ATP-dependent biosynthesis of glutamine from glutamate and ammonia. Also plays a key role in controlling the ammonia levels within infected host cells and so contributes to the pathogens capacity to inhibit phagosome acidification and phagosome-lysosome fusion. Involved in cell wall biosynthesis via the production of the major component poly-L-glutamine (PLG). PLG synthesis in the cell wall occurs only in nitrogen limiting conditions and on the contrary high nitrogen conditions inhibit PLG synthesis. The protein is Glutamine synthetase of Mycobacterium bovis (strain ATCC BAA-935 / AF2122/97).